The following is a 394-amino-acid chain: Protein arginine N-methyltransferase 8 (394 aa).

Gly-2 carries the N-myristoyl glycine lipid modification. Positions 16–40 (MAENAAESTEVNSPPSQPPQPVVPA) are disordered. Short sequence motifs (SH3-binding) lie at residues 29–42 (PPSQ…PAKP) and 53–58 (PSCPGR). A compositionally biased stretch (pro residues) spans 30 to 39 (PSQPPQPVVP). Arg-58 is subject to Omega-N-methylarginine; by autocatalysis. Arg-73 is subject to Asymmetric dimethylarginine; by autocatalysis. In terms of domain architecture, SAM-dependent MTase PRMT-type spans 73 to 394 (RDYYFDSYAH…TSVSNDYKMR (322 aa)). S-adenosyl-L-methionine is bound by residues His-86, Arg-95, Gly-119, 119–122 (GSGT), Glu-141, and Glu-170. Residues Glu-185 and Glu-194 contribute to the active site.

This sequence belongs to the class I-like SAM-binding methyltransferase superfamily. Protein arginine N-methyltransferase family. PRMT8 subfamily. Homodimer. Tetramer; individual homodimers associates to form a homotetramer. Homooctamer; individual homodimers associates to form a homooctamer and homooligomerization is required for proper localization to the cell membrane. Heterodimer with PRMT1; heterodimerization may recruit PRMT1 activity to the plasma membrane. Interacts with PRMT2 (via the SH3 domain). Interacts with FYN (via the SH3 domain). Interacts with EWS; independently of EWS methylation status. Brain-specific.

The protein resides in the cell membrane. The catalysed reaction is L-arginyl-[protein] + S-adenosyl-L-methionine = N(omega)-methyl-L-arginyl-[protein] + S-adenosyl-L-homocysteine + H(+). It catalyses the reaction L-arginyl-[protein] + 2 S-adenosyl-L-methionine = N(omega),N(omega)-dimethyl-L-arginyl-[protein] + 2 S-adenosyl-L-homocysteine + 2 H(+). In terms of biological role, S-adenosyl-L-methionine-dependent and membrane-associated arginine methyltransferase that can both catalyze the formation of omega-N monomethylarginine (MMA) and asymmetrical dimethylarginine (aDMA) in proteins such as NIFK, myelin basic protein, histone H4, H2A and H2A/H2B dimer. Able to mono- and dimethylate EWS protein; however its precise role toward EWS remains unclear as it still interacts with fully methylated EWS. The chain is Protein arginine N-methyltransferase 8 from Homo sapiens (Human).